The following is a 305-amino-acid chain: Serine/threonine-protein phosphatase ppe1 (305 aa).

Aspartate 51, histidine 53, aspartate 79, and asparagine 111 together coordinate Mn(2+). Histidine 112 serves as the catalytic Proton donor. Mn(2+) is bound by residues histidine 161 and histidine 235.

The protein belongs to the PPP phosphatase family. PP-6 (PP-V) subfamily. Interacts with sts5, ekc1 and mis12. It depends on Mn(2+) as a cofactor.

It localises to the nucleus. The enzyme catalyses O-phospho-L-seryl-[protein] + H2O = L-seryl-[protein] + phosphate. It catalyses the reaction O-phospho-L-threonyl-[protein] + H2O = L-threonyl-[protein] + phosphate. Functionally, has a role in chromosome segregation. May provide a dynamic connection between kinetochore microtubules and kinetochore chromatin. Negatively regulates mis12. The chain is Serine/threonine-protein phosphatase ppe1 (ppe1) from Schizosaccharomyces pombe (strain 972 / ATCC 24843) (Fission yeast).